The primary structure comprises 268 residues: Type III pantothenate kinase (268 aa).

Position 6–13 (D6–V13) interacts with ATP. Substrate contacts are provided by residues Y100 and G107–R110. The active-site Proton acceptor is D109. D129 is a K(+) binding site. Position 132 (T132) interacts with ATP. T184 is a binding site for substrate.

This sequence belongs to the type III pantothenate kinase family. As to quaternary structure, homodimer. Requires NH4(+) as cofactor. The cofactor is K(+).

It localises to the cytoplasm. It carries out the reaction (R)-pantothenate + ATP = (R)-4'-phosphopantothenate + ADP + H(+). It functions in the pathway cofactor biosynthesis; coenzyme A biosynthesis; CoA from (R)-pantothenate: step 1/5. In terms of biological role, catalyzes the phosphorylation of pantothenate (Pan), the first step in CoA biosynthesis. This Alkaliphilus metalliredigens (strain QYMF) protein is Type III pantothenate kinase.